Consider the following 202-residue polypeptide: Holliday junction resolvase RecU (202 aa).

Mg(2+) is bound by residues Thr85, Asp87, Glu100, and Gln119.

The protein belongs to the RecU family. The cofactor is Mg(2+).

It localises to the cytoplasm. The catalysed reaction is Endonucleolytic cleavage at a junction such as a reciprocal single-stranded crossover between two homologous DNA duplexes (Holliday junction).. In terms of biological role, endonuclease that resolves Holliday junction intermediates in genetic recombination. Cleaves mobile four-strand junctions by introducing symmetrical nicks in paired strands. Promotes annealing of linear ssDNA with homologous dsDNA. Required for DNA repair, homologous recombination and chromosome segregation. This chain is Holliday junction resolvase RecU, found in Streptococcus pyogenes serotype M5 (strain Manfredo).